The following is a 294-amino-acid chain: Phosphonoacetaldehyde hydrolase (294 aa).

D19 acts as the Nucleophile in catalysis. Mg(2+)-binding residues include D19 and A21. The Schiff-base intermediate with substrate role is filled by K60. Position 193 (D193) interacts with Mg(2+).

Belongs to the HAD-like hydrolase superfamily. PhnX family. In terms of assembly, homodimer. Requires Mg(2+) as cofactor.

The catalysed reaction is phosphonoacetaldehyde + H2O = acetaldehyde + phosphate + H(+). Involved in phosphonate degradation. The polypeptide is Phosphonoacetaldehyde hydrolase (Hahella chejuensis (strain KCTC 2396)).